Reading from the N-terminus, the 103-residue chain is Cyclotide vitri-A (103 aa).

Positions 1–9 are cleaved as a signal peptide; it reads AAFALPAFA. Residues 10–69 constitute a propeptide that is removed on maturation; that stretch reads SFEKDVITPAALEAVLNRKAPLSNIMMENDAIVNVIANVKTVISNPVLEEALLKTNHGVN. A cross-link (cyclopeptide (Gly-Asn)) is located at residues 70 to 99; sequence GIPCGESCVWIPCITSAIGCSCKSKVCYRN. 3 disulfides stabilise this stretch: Cys73–Cys89, Cys77–Cys91, and Cys82–Cys96. Positions 100–103 are excised as a propeptide; it reads SLDN.

In terms of processing, this is a cyclic peptide.

Its function is as follows. Probably participates in a plant defense mechanism. This chain is Cyclotide vitri-A, found in Viola biflora (Yellow wood violet).